A 283-amino-acid polypeptide reads, in one-letter code: ATP phosphoribosyltransferase (283 aa).

The protein belongs to the ATP phosphoribosyltransferase family. Long subfamily. It depends on Mg(2+) as a cofactor.

Its subcellular location is the cytoplasm. It catalyses the reaction 1-(5-phospho-beta-D-ribosyl)-ATP + diphosphate = 5-phospho-alpha-D-ribose 1-diphosphate + ATP. It participates in amino-acid biosynthesis; L-histidine biosynthesis; L-histidine from 5-phospho-alpha-D-ribose 1-diphosphate: step 1/9. Its activity is regulated as follows. Feedback inhibited by histidine. Functionally, catalyzes the condensation of ATP and 5-phosphoribose 1-diphosphate to form N'-(5'-phosphoribosyl)-ATP (PR-ATP). Has a crucial role in the pathway because the rate of histidine biosynthesis seems to be controlled primarily by regulation of HisG enzymatic activity. The protein is ATP phosphoribosyltransferase of Azobacteroides pseudotrichonymphae genomovar. CFP2.